Consider the following 321-residue polypeptide: Fibronectin type III domain-containing protein 8 (321 aa).

In terms of domain architecture, Fibronectin type-III spans 175–277 (VPEAPFVCEH…KPYKFATVAT (103 aa)).

In Bos taurus (Bovine), this protein is Fibronectin type III domain-containing protein 8 (FNDC8).